The primary structure comprises 149 residues: SsrA-binding protein (149 aa).

This sequence belongs to the SmpB family.

It localises to the cytoplasm. In terms of biological role, required for rescue of stalled ribosomes mediated by trans-translation. Binds to transfer-messenger RNA (tmRNA), required for stable association of tmRNA with ribosomes. tmRNA and SmpB together mimic tRNA shape, replacing the anticodon stem-loop with SmpB. tmRNA is encoded by the ssrA gene; the 2 termini fold to resemble tRNA(Ala) and it encodes a 'tag peptide', a short internal open reading frame. During trans-translation Ala-aminoacylated tmRNA acts like a tRNA, entering the A-site of stalled ribosomes, displacing the stalled mRNA. The ribosome then switches to translate the ORF on the tmRNA; the nascent peptide is terminated with the 'tag peptide' encoded by the tmRNA and targeted for degradation. The ribosome is freed to recommence translation, which seems to be the essential function of trans-translation. In Wolbachia pipientis subsp. Culex pipiens (strain wPip), this protein is SsrA-binding protein.